The sequence spans 318 residues: NADH-ubiquinone oxidoreductase chain 1 (318 aa).

8 helical membrane-spanning segments follow: residues 2–22 (FMIN…FLTL), 68–88 (ISMF…MWIP), 100–120 (LGVL…LWSG), 147–167 (AIIL…TLII), 172–192 (VWLI…TLAE), 217–237 (AGPF…MNIF), 253–273 (ELYT…FLWI), and 294–314 (LPLT…LSSI).

This sequence belongs to the complex I subunit 1 family.

The protein resides in the mitochondrion inner membrane. It carries out the reaction a ubiquinone + NADH + 5 H(+)(in) = a ubiquinol + NAD(+) + 4 H(+)(out). Functionally, core subunit of the mitochondrial membrane respiratory chain NADH dehydrogenase (Complex I) that is believed to belong to the minimal assembly required for catalysis. Complex I functions in the transfer of electrons from NADH to the respiratory chain. The immediate electron acceptor for the enzyme is believed to be ubiquinone. This is NADH-ubiquinone oxidoreductase chain 1 (MT-ND1) from Ovis aries (Sheep).